The sequence spans 469 residues: UDP-N-acetylmuramate--L-alanine ligase (469 aa).

Glycine 113 to threonine 119 provides a ligand contact to ATP.

This sequence belongs to the MurCDEF family.

It localises to the cytoplasm. The enzyme catalyses UDP-N-acetyl-alpha-D-muramate + L-alanine + ATP = UDP-N-acetyl-alpha-D-muramoyl-L-alanine + ADP + phosphate + H(+). Its pathway is cell wall biogenesis; peptidoglycan biosynthesis. In terms of biological role, cell wall formation. In Sorangium cellulosum (strain So ce56) (Polyangium cellulosum (strain So ce56)), this protein is UDP-N-acetylmuramate--L-alanine ligase.